Consider the following 50-residue polypeptide: Toxic protein HokE (50 aa).

A helical transmembrane segment spans residues 5–25 (YALAAVIVLCLTVLGFTLLVG).

This sequence belongs to the Hok/Gef family.

The protein resides in the cell inner membrane. Toxic component of a type I toxin-antitoxin (TA) system; if it expressed it could be neutralized by antisense antitoxin RNA SokE. The sequence is that of Toxic protein HokE from Escherichia coli (strain K12).